The sequence spans 139 residues: uncharacterized protein (139 aa).

Positions 83-109 (LIPPKKTSPATSSSLKPPRRPRGCLNG) are disordered. A compositionally biased stretch (low complexity) spans 86 to 98 (PKKTSPATSSSLK).

It to M.pneumoniae MPN_091 and MPN_463.

This is an uncharacterized protein from Mycoplasma pneumoniae (strain ATCC 29342 / M129 / Subtype 1) (Mycoplasmoides pneumoniae).